The chain runs to 142 residues: Large ribosomal subunit protein uL11 (142 aa).

The protein belongs to the universal ribosomal protein uL11 family. Part of the ribosomal stalk of the 50S ribosomal subunit. Interacts with L10 and the large rRNA to form the base of the stalk. L10 forms an elongated spine to which L12 dimers bind in a sequential fashion forming a multimeric L10(L12)X complex. One or more lysine residues are methylated.

Functionally, forms part of the ribosomal stalk which helps the ribosome interact with GTP-bound translation factors. In Rhodospirillum rubrum (strain ATCC 11170 / ATH 1.1.1 / DSM 467 / LMG 4362 / NCIMB 8255 / S1), this protein is Large ribosomal subunit protein uL11.